The chain runs to 303 residues: 2-(5''-triphosphoribosyl)-3'-dephosphocoenzyme-A synthase (303 aa).

It belongs to the CitG/MdcB family.

The enzyme catalyses 3'-dephospho-CoA + ATP = 2'-(5''-triphospho-alpha-D-ribosyl)-3'-dephospho-CoA + adenine. Catalyzes the formation of 2-(5''-triphosphoribosyl)-3'-dephosphocoenzyme-A, the precursor of the prosthetic group of the holo-acyl carrier protein (gamma chain) of citrate lyase, from ATP and dephospho-CoA. The polypeptide is 2-(5''-triphosphoribosyl)-3'-dephosphocoenzyme-A synthase (Escherichia fergusonii (strain ATCC 35469 / DSM 13698 / CCUG 18766 / IAM 14443 / JCM 21226 / LMG 7866 / NBRC 102419 / NCTC 12128 / CDC 0568-73)).